Consider the following 405-residue polypeptide: Putative colanic acid polymerase (405 aa).

11 helical membrane passes run 5–25 (IRICSYLLLPLIYLLVNVKIA), 27–47 (LGESFPITIVTFLPVLLLLFL), 55–75 (LMIALGIGAGLTAFNYLFGQS), 81–101 (YVTSTMLFVYIVIIIGMVWSI), 117–137 (FFYLVVGLVVALAAVEMAQII), 171–191 (TALYFEPAFFALALISIWLSI), 204–224 (MILAGIILSGSFSGVMTFILF), 244–264 (PLALISLAVFLVGVVIAFPYI), 282–302 (IVGPLVMVGYSLTHIDGVVRF), 327–347 (GLYLLIIYFSWFAVFLSLWYM), and 376–396 (LFFTGSIFSPEYAFLIVCPFI).

It localises to the cell inner membrane. The protein operates within slime biogenesis; slime polysaccharide biosynthesis. The polypeptide is Putative colanic acid polymerase (wcaD) (Escherichia coli (strain K12)).